The chain runs to 352 residues: Histidinol-phosphate aminotransferase 1 (352 aa).

Lys-211 is modified (N6-(pyridoxal phosphate)lysine).

The protein belongs to the class-II pyridoxal-phosphate-dependent aminotransferase family. Histidinol-phosphate aminotransferase subfamily. As to quaternary structure, homodimer. It depends on pyridoxal 5'-phosphate as a cofactor.

It carries out the reaction L-histidinol phosphate + 2-oxoglutarate = 3-(imidazol-4-yl)-2-oxopropyl phosphate + L-glutamate. The protein operates within amino-acid biosynthesis; L-histidine biosynthesis; L-histidine from 5-phospho-alpha-D-ribose 1-diphosphate: step 7/9. The protein is Histidinol-phosphate aminotransferase 1 of Haemophilus influenzae (strain 86-028NP).